Reading from the N-terminus, the 311-residue chain is R2-like ligand binding oxidase (311 aa).

Glu68, Glu101, and His104 together coordinate Mn(2+). The segment at residues 71–162 (VTQDIQPFMA…AAQVRASVTY (92 aa)) is a cross-link (3-(O4'-tyrosyl)-valine (Val-Tyr)). Residue Glu101 coordinates Fe cation. Residues Glu167, Glu202, and His205 each contribute to the Fe cation site.

The protein belongs to the ribonucleoside diphosphate reductase small chain family. R2-like ligand binding oxidase subfamily. In terms of assembly, homodimer. Fe cation serves as cofactor. It depends on Mn(2+) as a cofactor.

Its function is as follows. Probable oxidase that might be involved in lipid metabolism. This chain is R2-like ligand binding oxidase, found in Mycobacterium avium (strain 104).